Reading from the N-terminus, the 93-residue chain is Leydig cell tumor 10 kDa protein (93 aa).

Residues 1–41 (MAQGQRKFQAQKPKSKAAAAERSRGPRKGGRVIGPKKARVV) form a disordered region. Low complexity predominate over residues 7–18 (KFQAQKPKSKAA). The segment covering 25-39 (GPRKGGRVIGPKKAR) has biased composition (basic residues).

The protein belongs to the UPF0390 family. In terms of tissue distribution, leydig cell tumor, testis and placenta.

Its function is as follows. May have a potential role in hypercalcemia of malignancy. This is Leydig cell tumor 10 kDa protein from Rattus norvegicus (Rat).